Consider the following 858-residue polypeptide: Lysine-specific demethylase JMJ706 (858 aa).

Residues 103-144 form the JmjN domain; the sequence is CPVYYPTKEEFEDPIGYIQKIAPVASKYGICKIVSPVSASVP. Residues 250–420 enclose the JmjC domain; that stretch reads KSNWNLKNFS…LGSVASRRYA (171 aa). His-293, Glu-295, and His-388 together coordinate Fe cation. A compositionally biased stretch (basic and acidic residues) spans 737–746; it reads QHNKRPEDYG. Disordered regions lie at residues 737-791 and 829-858; these read QHNK…SAKQ and SSST…WPAI. The segment covering 829-844 has biased composition (polar residues); it reads SSSTNRVVEQGSSGQR.

Requires Fe(2+) as cofactor.

Its subcellular location is the nucleus. The enzyme catalyses N(6),N(6),N(6)-trimethyl-L-lysyl(9)-[histone H3] + 2 2-oxoglutarate + 2 O2 = N(6)-methyl-L-lysyl(9)-[histone H3] + 2 formaldehyde + 2 succinate + 2 CO2. Its function is as follows. Histone demethylase that demethylates 'Lys-9' (H3K9me) of histone H3 with a specific activity for H3K9me3 and H3K9me2. No activity on H3K4me3, H3K9me1, H3K27me2 and H3K36me3/2. Involved in the control of floral organ development by demethylating H3K9me3 and H3K9me2 in the promoter regions of DH1 and MADS47. The 'Lys-9' demethylation of these two genes is required for induction of their expression. The protein is Lysine-specific demethylase JMJ706 (JMJ706) of Oryza sativa subsp. japonica (Rice).